The primary structure comprises 394 residues: Elongation factor Tu, mitochondrial (394 aa).

The region spanning 10-204 is the tr-type G domain; sequence KPHCNIGTIG…AVDNYIPQPE (195 aa). Residues 19-26 form a G1 region; it reads GHVDHGKT. Position 19–26 (19–26) interacts with GTP; sequence GHVDHGKT. The G2 stretch occupies residues 60–64; it reads GITIS. Residues 81–84 are G3; that stretch reads DCPG. GTP-binding positions include 81–85 and 136–139; these read DCPGH and NKVD. Residues 136–139 are G4; that stretch reads NKVD. The interval 174–176 is G5; that stretch reads SAL.

It belongs to the TRAFAC class translation factor GTPase superfamily. Classic translation factor GTPase family. EF-Tu/EF-1A subfamily.

The protein localises to the mitochondrion. Its function is as follows. This protein promotes the GTP-dependent binding of aminoacyl-tRNA to the A-site of ribosomes during protein biosynthesis. This chain is Elongation factor Tu, mitochondrial (TUFA), found in Reclinomonas americana.